Consider the following 1129-residue polypeptide: Protein DWARF 53-LIKE (1129 aa).

Residues 8 to 180 (ARQCLSPAAV…KLAILRPAPP (173 aa)) form the Clp R domain. Repeat stretches follow at residues 12–85 (LSPA…LDRL) and 102–180 (VSNS…PAPP). Residues 519-573 (RYIGVPADKERSANPSKGSESIGVQKDVIKPCAVSAVHSSSTARPISSPSVTNKR) form a disordered region. Positions 557-568 (SSSTARPISSPS) are enriched in low complexity. Positions 577 to 581 (LVLNL) match the EAR 1 motif. The disordered stretch occupies residues 587-654 (KSDENLQERG…KRVEDSERSV (68 aa)). Residues 596–608 (GMQSQHGTLSNAD) show a composition bias toward polar residues. Basic and acidic residues predominate over residues 645 to 654 (KRVEDSERSV). 2 short sequence motifs (EAR) span residues 798-802 (LDLNL) and 975-980 (FDLNLP). Residues 975-1001 (FDLNLPVDEDEPFDADDDSSSHENSYG) are disordered. Residues 981-992 (VDEDEPFDADDD) are compositionally biased toward acidic residues.

The protein belongs to the ClpA/ClpB family. Polyubiquitinated. Strigolactone, but not karrikin, triggers rapid SCF(D3)-dependent degradation via the proteasome.

Repressor of strigolactones (SL) signaling. Subjected to a negative feedback control of SL signaling. The chain is Protein DWARF 53-LIKE from Oryza sativa subsp. japonica (Rice).